The primary structure comprises 407 residues: 1-deoxy-D-xylulose 5-phosphate reductoisomerase (407 aa).

Positions 10, 11, 12, 13, 36, and 131 each coordinate NADPH. Lys132 serves as a coordination point for 1-deoxy-D-xylulose 5-phosphate. Position 133 (Glu133) interacts with NADPH. Position 155 (Asp155) interacts with Mn(2+). Residues Ser156, Glu157, Ser181, and His204 each contribute to the 1-deoxy-D-xylulose 5-phosphate site. Mn(2+) is bound at residue Glu157. Gly210 provides a ligand contact to NADPH. Residues Ser217, Asn222, Lys223, and Glu226 each coordinate 1-deoxy-D-xylulose 5-phosphate. Glu226 serves as a coordination point for Mn(2+).

It belongs to the DXR family. The cofactor is Mg(2+). It depends on Mn(2+) as a cofactor.

The enzyme catalyses 2-C-methyl-D-erythritol 4-phosphate + NADP(+) = 1-deoxy-D-xylulose 5-phosphate + NADPH + H(+). The protein operates within isoprenoid biosynthesis; isopentenyl diphosphate biosynthesis via DXP pathway; isopentenyl diphosphate from 1-deoxy-D-xylulose 5-phosphate: step 1/6. Functionally, catalyzes the NADPH-dependent rearrangement and reduction of 1-deoxy-D-xylulose-5-phosphate (DXP) to 2-C-methyl-D-erythritol 4-phosphate (MEP). The sequence is that of 1-deoxy-D-xylulose 5-phosphate reductoisomerase from Cutibacterium acnes (strain DSM 16379 / KPA171202) (Propionibacterium acnes).